Reading from the N-terminus, the 353-residue chain is DNA-directed RNA polymerase subunit alpha (353 aa).

An alpha N-terminal domain (alpha-NTD) region spans residues 1 to 234 (MVQEKVRVST…DLFIPFLHTE (234 aa)). The alpha C-terminal domain (alpha-CTD) stretch occupies residues 266–353 (KKIALKSIFI…LAQSIYSESG (88 aa)).

This sequence belongs to the RNA polymerase alpha chain family. In terms of assembly, in plastids the minimal PEP RNA polymerase catalytic core is composed of four subunits: alpha, beta, beta', and beta''. When a (nuclear-encoded) sigma factor is associated with the core the holoenzyme is formed, which can initiate transcription.

The protein localises to the plastid. The protein resides in the chloroplast. The enzyme catalyses RNA(n) + a ribonucleoside 5'-triphosphate = RNA(n+1) + diphosphate. DNA-dependent RNA polymerase catalyzes the transcription of DNA into RNA using the four ribonucleoside triphosphates as substrates. The chain is DNA-directed RNA polymerase subunit alpha from Panax ginseng (Korean ginseng).